We begin with the raw amino-acid sequence, 465 residues long: Cysteine--tRNA ligase (465 aa).

C27 is a Zn(2+) binding site. The 'HIGH' region signature appears at 29–39 (PTVYDDAHLGH). Residues C207, H237, and E241 each coordinate Zn(2+). The short motif at 269–273 (KMSKS) is the 'KMSKS' region element. Residue K272 participates in ATP binding.

Belongs to the class-I aminoacyl-tRNA synthetase family. As to quaternary structure, monomer. Zn(2+) serves as cofactor.

The protein resides in the cytoplasm. It catalyses the reaction tRNA(Cys) + L-cysteine + ATP = L-cysteinyl-tRNA(Cys) + AMP + diphosphate. The sequence is that of Cysteine--tRNA ligase from Helicobacter pylori (strain HPAG1).